Here is a 445-residue protein sequence, read N- to C-terminus: tRNA modification GTPase MnmE (445 aa).

(6S)-5-formyl-5,6,7,8-tetrahydrofolate-binding residues include Arg-20, Glu-79, and Lys-119. The 157-residue stretch at 215-371 (GLKLAIIGPP…ILKNIENIAE (157 aa)) folds into the TrmE-type G domain. K(+) is bound at residue Asn-225. Residues 225-230 (NVGKSS), 244-250 (SNIAGTT), and 269-272 (DTAG) each bind GTP. Mg(2+) is bound at residue Ser-229. Residues Ser-244, Ile-246, and Thr-249 each contribute to the K(+) site. Thr-250 serves as a coordination point for Mg(2+). Lys-445 serves as a coordination point for (6S)-5-formyl-5,6,7,8-tetrahydrofolate.

The protein belongs to the TRAFAC class TrmE-Era-EngA-EngB-Septin-like GTPase superfamily. TrmE GTPase family. In terms of assembly, homodimer. Heterotetramer of two MnmE and two MnmG subunits. It depends on K(+) as a cofactor.

Its subcellular location is the cytoplasm. Its function is as follows. Exhibits a very high intrinsic GTPase hydrolysis rate. Involved in the addition of a carboxymethylaminomethyl (cmnm) group at the wobble position (U34) of certain tRNAs, forming tRNA-cmnm(5)s(2)U34. In Rickettsia rickettsii (strain Iowa), this protein is tRNA modification GTPase MnmE.